We begin with the raw amino-acid sequence, 319 residues long: Protoheme IX farnesyltransferase (319 aa).

Helical transmembrane passes span 59 to 79 (IGLI…AGAF), 108 to 128 (EALV…WFGA), 131 to 151 (LSAW…TIIL), 158 to 178 (NIVW…AAVT), 183 to 203 (WPAI…YWPL), 232 to 252 (VVLY…AGGA), 254 to 274 (WVYT…SHAL), and 299 to 319 (LTLL…VIGG).

This sequence belongs to the UbiA prenyltransferase family. Protoheme IX farnesyltransferase subfamily.

The protein resides in the cell membrane. The catalysed reaction is heme b + (2E,6E)-farnesyl diphosphate + H2O = Fe(II)-heme o + diphosphate. Its pathway is porphyrin-containing compound metabolism; heme O biosynthesis; heme O from protoheme: step 1/1. Its function is as follows. Converts heme B (protoheme IX) to heme O by substitution of the vinyl group on carbon 2 of heme B porphyrin ring with a hydroxyethyl farnesyl side group. The protein is Protoheme IX farnesyltransferase of Pseudarthrobacter chlorophenolicus (strain ATCC 700700 / DSM 12829 / CIP 107037 / JCM 12360 / KCTC 9906 / NCIMB 13794 / A6) (Arthrobacter chlorophenolicus).